The following is a 275-amino-acid chain: Large ribosomal subunit protein uL2c (275 aa).

Positions 225–275 (MNPCDHPHGGGEGRSPIGRPRPVSPWGKPALGQRTRKGHKYSDQMILRRRK) are disordered.

Belongs to the universal ribosomal protein uL2 family. Part of the 50S ribosomal subunit.

It localises to the plastid. It is found in the chloroplast. The polypeptide is Large ribosomal subunit protein uL2c (rpl2) (Oltmannsiellopsis viridis (Marine flagellate)).